Reading from the N-terminus, the 453-residue chain is UDP-N-acetylmuramoylalanine--D-glutamate ligase (453 aa).

117–123 contacts ATP; the sequence is GTNGKTT.

It belongs to the MurCDEF family.

The protein resides in the cytoplasm. The enzyme catalyses UDP-N-acetyl-alpha-D-muramoyl-L-alanine + D-glutamate + ATP = UDP-N-acetyl-alpha-D-muramoyl-L-alanyl-D-glutamate + ADP + phosphate + H(+). Its pathway is cell wall biogenesis; peptidoglycan biosynthesis. Its function is as follows. Cell wall formation. Catalyzes the addition of glutamate to the nucleotide precursor UDP-N-acetylmuramoyl-L-alanine (UMA). This Caldicellulosiruptor saccharolyticus (strain ATCC 43494 / DSM 8903 / Tp8T 6331) protein is UDP-N-acetylmuramoylalanine--D-glutamate ligase.